A 452-amino-acid chain; its full sequence is Scaffold protein ILK (452 aa).

M1 carries the post-translational modification N-acetylmethionine. ANK repeat units lie at residues 2 to 30, 31 to 63, 64 to 96, 97 to 129, and 130 to 174; these read DDIF…LNQG, DDHG…INVM, NRGD…INAV, NEHG…VSIC, and NKYG…GTTR. The segment at 33–139 is interaction with LIMS1; sequence HGFSPLHWAC…NKYGEMPVDK (107 aa). Phosphothreonine is present on T173. A PH-like; mediates interaction with TGFB1I1 region spans residues 180–212; sequence GTLNKHSGIDFKQLNFLAKLNENHSGELWKGRW. The residue at position 186 (S186) is a Phosphoserine. Residues 193–446 form the Protein kinase domain; the sequence is LNFLAKLNEN…PKFDMIVPIL (254 aa). 4 residues coordinate ATP: N200, N202, H203, and S204. Position 246 is a phosphoserine (S246). ATP contacts are provided by H270, M272, and N279. A Mg(2+)-binding site is contributed by D339. K341 provides a ligand contact to ATP. The Nuclear localization signal signature appears at 363 to 371; it reads KKPEDTNRR. K426 carries the post-translational modification N6-acetyllysine.

It belongs to the protein kinase superfamily. TKL Ser/Thr protein kinase family. Component of the heterotrimeric IPP (ILK-PINCH-PARVIN) complex composed of ILK, LIMS1/PINCH and PARVA; the complex binds to F-actin via the C-terminal tail of LIMS1 and the N-terminal region of PARVA, promoting F-actin filament bundling. Formation of the IPP complex is dependent on protein kinase C and precedes integrin-mediated cell adhesion and spreading. ILK also interacts with LIMS2/PINCH2 and with PARVB and PARVG which may substitute for LIMS1 and PARVA in the IPP complex; PARVA and PARVB compete for the same binding site. Interaction with PARVG promotes the establishment of cell polarity required for leukocyte migration. Interacts with the cytoplasmic domain of integrin ITGB1 and may also interact with integrins ITGB2, ITGB3 and/or ITGB5. Interacts probably also with TGFB1I1. Interacts (via ANK repeats) with EPHA1 (via SAM domain); stimulated by EFNA1 but independent of the kinase activity of EPHA1. Interacts with FERMT2. Interacts with LIMD2; leading to activate the protein kinase activity. Interacts with PXN/PAXILLIN (via LD motif 4). Interacts with CCDC25 (via cytoplasmic region); initiating the ILK-PARVB cascade to induce cytoskeleton rearrangement and directional migration of cells. Interacts with IQGAP1; the interaction is required for localization of IQGAP1 to the cell cortex. Post-translationally, phosphorylation by PAK1 modulates ILK subcellular location by promoting its nuclear export. In terms of tissue distribution, highly expressed in lung, heart, kidney, liver, brain, spleen and skeletal muscle. Weakly expressed in testis.

Its subcellular location is the cell junction. The protein localises to the focal adhesion. It localises to the cell membrane. The protein resides in the cytoplasm. It is found in the myofibril. Its subcellular location is the sarcomere. The protein localises to the cell projection. It localises to the lamellipodium. The protein resides in the nucleus. It is found in the cytoskeleton. Its subcellular location is the microtubule organizing center. The protein localises to the centrosome. It localises to the cell cortex. Its function is as follows. Scaffold protein which mediates protein-protein interactions during a range of cellular events including focal adhesion assembly, cell adhesion and cell migration. Regulates integrin-mediated signal transduction by contributing to inside-out integrin activation. Recruits PARVA and LIMS1/PITCH to form the heterotrimeric IPP (ILK-PINCH-PARVIN) complex which binds to F-actin via the C-terminal tail of LIMS1 and the N-terminal region of PARVA, promoting F-actin filament bundling, a process required to generate force for actin cytoskeleton reorganization and subsequent dynamic cell adhesion events such as cell spreading and migration. Binding to PARVA promotes effective assembly of ILK into focal adhesions while PARVA-bound ILK can simultaneously engage integrin-beta cytoplasmic tails to mediate cell adhesion. Plays a role with PARVG in promoting the cell adhesion and spreading of leukocytes. Acts as an upstream effector of both AKT1/PKB and GSK3. Mediates trafficking of caveolae to the cell surface in an ITGB1-dependent manner by promoting the recruitment of IQGAP1 to the cell cortex which cooperates with its effector DIAPH1 to locally stabilize microtubules and allow stable insertion of caveolae into the plasma membrane. Required for the maintenance of mitotic spindle integrity by promoting phosphorylation of TACC3 by AURKA. Associates with chromatin and may act as a negative regulator of transcription when located in the nucleus. The protein is Scaffold protein ILK of Mus musculus (Mouse).